The following is a 120-amino-acid chain: NAD(P)H-quinone oxidoreductase subunit 3, chloroplastic (120 aa).

Helical transmembrane passes span 9–29, 64–84, and 88–108; these read IFWT…SISG, MFAL…PWAM, and VLGV…VVGL.

This sequence belongs to the complex I subunit 3 family. NDH is composed of at least 16 different subunits, 5 of which are encoded in the nucleus.

The protein localises to the plastid. It localises to the chloroplast thylakoid membrane. It carries out the reaction a plastoquinone + NADH + (n+1) H(+)(in) = a plastoquinol + NAD(+) + n H(+)(out). It catalyses the reaction a plastoquinone + NADPH + (n+1) H(+)(in) = a plastoquinol + NADP(+) + n H(+)(out). Its function is as follows. NDH shuttles electrons from NAD(P)H:plastoquinone, via FMN and iron-sulfur (Fe-S) centers, to quinones in the photosynthetic chain and possibly in a chloroplast respiratory chain. The immediate electron acceptor for the enzyme in this species is believed to be plastoquinone. Couples the redox reaction to proton translocation, and thus conserves the redox energy in a proton gradient. The chain is NAD(P)H-quinone oxidoreductase subunit 3, chloroplastic from Hordeum vulgare (Barley).